We begin with the raw amino-acid sequence, 213 residues long: N-(5'-phosphoribosyl)anthranilate isomerase (213 aa).

Belongs to the TrpF family.

It carries out the reaction N-(5-phospho-beta-D-ribosyl)anthranilate = 1-(2-carboxyphenylamino)-1-deoxy-D-ribulose 5-phosphate. Its pathway is amino-acid biosynthesis; L-tryptophan biosynthesis; L-tryptophan from chorismate: step 3/5. In Rhodopseudomonas palustris (strain ATCC BAA-98 / CGA009), this protein is N-(5'-phosphoribosyl)anthranilate isomerase.